The primary structure comprises 485 residues: Hemolysin (485 aa).

Positions 1 to 28 (MKNFKGRKFLTCVLVSLCTLNYSSISFA) are cleaved as a signal peptide. The next 4 beta stranded transmembrane spans lie at 196 to 209 (KAQI…NAKY), 216 to 225 (IDFNAVANGE), 294 to 303 (SKDVQAAFKA), and 311 to 323 (ETSG…FEES). Residues 465-475 (ECTGLAWEWWR) carry the Conserved undecapeptide motif.

This sequence belongs to the cholesterol-dependent cytolysin family. Homooligomeric pore complex of 35 to 50 subunits; when inserted in the host membrane.

It localises to the secreted. Its subcellular location is the host cell membrane. Functionally, a cholesterol-dependent toxin with hemolytic activity against host red blood cells. Causes cytolysis by forming pores in cholesterol containing host membranes. binding to target membranes, the protein undergoes a major conformation change, leading to its insertion in the host membrane and formation of an oligomeric pore complex. Cholesterol is required for binding to host membranes, membrane insertion and pore formation; cholesterol binding is mediated by a Thr-Leu pair in the C-terminus. Can be reversibly inactivated by oxidation. The polypeptide is Hemolysin (Bacillus cereus).